The following is a 316-amino-acid chain: 4-diphosphocytidyl-2-C-methyl-D-erythritol kinase (316 aa).

Lys-32 is a catalytic residue. Residue Pro-126–Ala-136 participates in ATP binding. Asp-168 is an active-site residue.

Belongs to the GHMP kinase family. IspE subfamily.

It catalyses the reaction 4-CDP-2-C-methyl-D-erythritol + ATP = 4-CDP-2-C-methyl-D-erythritol 2-phosphate + ADP + H(+). It functions in the pathway isoprenoid biosynthesis; isopentenyl diphosphate biosynthesis via DXP pathway; isopentenyl diphosphate from 1-deoxy-D-xylulose 5-phosphate: step 3/6. In terms of biological role, catalyzes the phosphorylation of the position 2 hydroxy group of 4-diphosphocytidyl-2C-methyl-D-erythritol. This Bifidobacterium longum subsp. infantis (strain ATCC 15697 / DSM 20088 / JCM 1222 / NCTC 11817 / S12) protein is 4-diphosphocytidyl-2-C-methyl-D-erythritol kinase.